Here is a 524-residue protein sequence, read N- to C-terminus: Putative cysteine ligase BshC (524 aa).

The stretch at 437 to 457 (AQALDRSARKINYQIEKMERK) forms a coiled coil.

The protein belongs to the BshC family.

The protein is Putative cysteine ligase BshC of Solibacter usitatus (strain Ellin6076).